Consider the following 329-residue polypeptide: Ketol-acid reductoisomerase (NADP(+)) (329 aa).

The KARI N-terminal Rossmann domain maps to 2-182; the sequence is TQLFYDTDAD…GGTRAGILET (181 aa). Residues 25-28, serine 51, serine 53, and 83-86 contribute to the NADP(+) site; these read YGSQ and DEFQ. Histidine 108 is a catalytic residue. An NADP(+)-binding site is contributed by glycine 134. The KARI C-terminal knotted domain occupies 183–328; it reads NFKEETETDL…KGLRSMFSWL (146 aa). Residues aspartate 191, glutamate 195, glutamate 227, and glutamate 231 each coordinate Mg(2+). Serine 252 contributes to the substrate binding site.

The protein belongs to the ketol-acid reductoisomerase family. The cofactor is Mg(2+).

The enzyme catalyses (2R)-2,3-dihydroxy-3-methylbutanoate + NADP(+) = (2S)-2-acetolactate + NADPH + H(+). It catalyses the reaction (2R,3R)-2,3-dihydroxy-3-methylpentanoate + NADP(+) = (S)-2-ethyl-2-hydroxy-3-oxobutanoate + NADPH + H(+). It functions in the pathway amino-acid biosynthesis; L-isoleucine biosynthesis; L-isoleucine from 2-oxobutanoate: step 2/4. It participates in amino-acid biosynthesis; L-valine biosynthesis; L-valine from pyruvate: step 2/4. Involved in the biosynthesis of branched-chain amino acids (BCAA). Catalyzes an alkyl-migration followed by a ketol-acid reduction of (S)-2-acetolactate (S2AL) to yield (R)-2,3-dihydroxy-isovalerate. In the isomerase reaction, S2AL is rearranged via a Mg-dependent methyl migration to produce 3-hydroxy-3-methyl-2-ketobutyrate (HMKB). In the reductase reaction, this 2-ketoacid undergoes a metal-dependent reduction by NADPH to yield (R)-2,3-dihydroxy-isovalerate. This Prochlorococcus marinus (strain MIT 9215) protein is Ketol-acid reductoisomerase (NADP(+)).